We begin with the raw amino-acid sequence, 432 residues long: Luc7-like protein 3 (432 aa).

An N-acetylmethionine modification is found at methionine 1. Serine 3, serine 110, and serine 115 each carry phosphoserine. A coiled-coil region spans residues lysine 124 to serine 181. At lysine 231 the chain carries N6-acetyllysine. Positions leucine 234–arginine 287 are enriched in basic and acidic residues. Residues leucine 234–asparagine 432 are disordered. The segment covering glutamate 288–serine 301 has biased composition (basic residues). Residues arginine 302 to serine 311 are compositionally biased toward basic and acidic residues. Positions arginine 312–serine 367 are enriched in basic residues. Over residues arginine 368–asparagine 414 the composition is skewed to basic and acidic residues. Serine 420 carries the post-translational modification Phosphoserine. The segment covering glutamate 421 to asparagine 432 has biased composition (basic and acidic residues). Residue lysine 424 forms a Glycyl lysine isopeptide (Lys-Gly) (interchain with G-Cter in SUMO1); alternate linkage. Lysine 424 participates in a covalent cross-link: Glycyl lysine isopeptide (Lys-Gly) (interchain with G-Cter in SUMO2); alternate. Phosphoserine is present on residues serine 425 and serine 431.

The protein belongs to the Luc7 family. In terms of assembly, may interact with SFRS1 and form homodimers. Interacts with JMJD6. Interacts with RBM25. Interacts with RSRC1 (via Arg/Ser-rich domain). Interacts with RRP1B. Post-translationally, phosphorylated in vitro by SRPK1, SRPK2 and CLK1. In terms of tissue distribution, widely expressed. Highest levels in heart, brain, pancreas, thymus, ovary, small intestine and peripheral blood leukocytes, as well as cerebellum, putamen and pituitary gland. Lowest levels in lung, liver and kidney. Also expressed in fetal tissues, including brain, heart, kidney, thymus and lung.

It is found in the nucleus speckle. In terms of biological role, binds cAMP regulatory element DNA sequence. May play a role in RNA splicing. The sequence is that of Luc7-like protein 3 (LUC7L3) from Homo sapiens (Human).